The primary structure comprises 379 residues: Retinoic acid receptor RXR-alpha-B (379 aa).

Residues 1-22 (MPVPEQKQTVQLSSPMNAVSSS) show a composition bias toward polar residues. The interval 1 to 24 (MPVPEQKQTVQLSSPMNAVSSSED) is disordered. Residues 1-53 (MPVPEQKQTVQLSSPMNAVSSSEDIKPPLGLNGVMKVPAHRIGTLSLSLTKHI) form a modulating region. The segment at residues 51–126 (KHICAICGDR…MGMKREAVQE (76 aa)) is a DNA-binding region (nuclear receptor). 4 residues coordinate Zn(2+): C54, C57, C71, and C74. Residues 54-74 (CAICGDRSSGKHYGVYSCEGC) form an NR C4-type zinc finger. The segment at 79-84 (KRTVRK) is nuclear localization signal. 4 residues coordinate Zn(2+): C90, C96, C106, and C109. The segment at 90–109 (CRDNKDCMIDKRQRNRCQYC) adopts an NR C4-type zinc-finger fold. The segment at 120–141 (KREAVQEERQRAKERSEAEFGG) is hinge. The 232-residue stretch at 144-375 (NEDMPVEKIL…TFLMEMLEAP (232 aa)) folds into the NR LBD domain. R233 and A244 together coordinate 9-cis-retinoate. Residues R233 and A244 each coordinate all-trans-retinoate. The required for nuclear export stretch occupies residues 265–285 (RVLTELVSKMRDMQMDKTELG). The interval 364–375 (IDTFLMEMLEAP) is AF-2.

This sequence belongs to the nuclear hormone receptor family. NR2 subfamily. As to quaternary structure, homodimer. Heterodimer; with a rar molecule. Binds DNA preferentially as a rar/rxr heterodimer. Uniform expression from the blastula to mid-gastrula stages. At 12 hours post-fertilization (hpf), expressed strongly in the tail and weakly elsewhere. At 24 hpf, weak expression in the forebrain, eyes and pharyngeal endoderm and continued expression in the tail mesoderm. At 48 hpf, anterior expression limited to ventral cells underlying the head, medial expression in the pectoral fin bud mesoderm and continued tail expression.

It is found in the nucleus. Receptor for retinoic acid that acts as a transcription factor. Forms homo- or heterodimers with retinoic acid receptors (rars) and binds to target response elements in response to their ligands, all-trans or 9-cis retinoic acid, to regulate gene expression in various biological processes. The rar/rxr heterodimers bind to the retinoic acid response elements (RARE) composed of tandem 5'-AGGTCA-3' sites known as DR1-DR5 to regulate transcription. The high affinity ligand for rxrs is 9-cis retinoic acid. In the absence of ligand, the rar/rxr heterodimers associate with a multiprotein complex containing transcription corepressors that induce histone deacetylation, chromatin condensation and transcriptional suppression. On ligand binding, the corepressors dissociate from the receptors and coactivators are recruited leading to transcriptional activation. In Danio rerio (Zebrafish), this protein is Retinoic acid receptor RXR-alpha-B (rxrab).